A 245-amino-acid polypeptide reads, in one-letter code: Probable transcriptional regulatory protein NSE_0641 (245 aa).

The segment at 1-22 (MAGHSQYANIKHRKNAQDAKRA) is disordered.

Belongs to the TACO1 family.

Its subcellular location is the cytoplasm. The polypeptide is Probable transcriptional regulatory protein NSE_0641 (Neorickettsia sennetsu (strain ATCC VR-367 / Miyayama) (Ehrlichia sennetsu)).